The following is a 244-amino-acid chain: Membrane-spanning 4-domains subfamily A member 6B (244 aa).

Topologically, residues 1–46 (MIPQVVTSETVAMISPNGMSLPQTDKPQPFHQWQDSLKKHLKAEIK) are cytoplasmic. The helical transmembrane segment at 47 to 67 (VMAAIQIMCAVMVLSLGIILA) threads the bilayer. The Extracellular segment spans residues 68 to 84 (SVPSNLHFTSVFSVLLK). A helical transmembrane segment spans residues 85-105 (SGYPFIGALFFIVSGILSIVT). Residues 106 to 121 (ETKSTKILVDSSLTLN) lie on the Cytoplasmic side of the membrane. The chain crosses the membrane as a helical span at residues 122–142 (ILSVSFAFMGIIIISVSLAGL). The Extracellular segment spans residues 143-176 (HPASEQCLQSKELRPTEYHYYQFLDRNECFAAKS). The helical transmembrane segment at 177-197 (VLAGVFSLMLISTMLELGLAV) threads the bilayer. Residues 198-244 (LTAMLWWKQSHSNIPGNVMFLPHSSNNDSNMESKVLCNPSYEEQLVC) are Cytoplasmic-facing.

This sequence belongs to the MS4A family. In terms of tissue distribution, expressed at high levels in thymus, spleen, and peripheral lymph nodes, with less abundant levels in non-lymphoid tissues.

The protein localises to the membrane. Functionally, may be involved in signal transduction as a component of a multimeric receptor complex. The chain is Membrane-spanning 4-domains subfamily A member 6B (Ms4a6b) from Mus musculus (Mouse).